Consider the following 1333-residue polypeptide: MKVTVCFGRTRVVVPCGDGRMKVFSLIQQAVTRYRKAVAKDPNYWIQVHRLEHGDGGILDLDDILCDVADDKDRLVAVFDEQDPHHGGDGTSASFTGTQSPEIFGSELGTNNVSAFQPYQATSEIEVTPSVLRANMPLHVRRSSDPALTGLSTSVSDNNFSSEEPSRKNPTRWSTTAGFLKQNTAGSPKTCDRKKDENYRSLPRDPSSWSNQFQRDNARSSLSASHPMVDRWLEKQEQDEEGTEEDSSRVEPVGHADTGLENMPNFSLDDMVKLVQVPNDGGPLGIHVVPFSARGGRTLGLLVKRLEKGGKAEQENLFHENDCIVRINDGDLRNRRFEQAQHMFRQAMRARVIWFHVVPAANKEQYEQLSQREKNNYSPGRFSPDSHCVANRSVANNAPQALPRAPRLSQPPEQLDAHPRLPHSAHASTKPPAAPALAPPSVLSTNVGSVYNTKKVGKRLNIQLKKGTEGLGFSITSRDVTIGGSAPIYVKNILPRGAAIQDGRLKAGDRLIEVNGVDLAGKSQEEVVSLLRSTKMEGTVSLLVFRQEEAFHPREMNAEPSQMQTPKETKAEDEDVVLTPDGTREFLTFEVPLNDSGSAGLGVSVKGNRSKENHADLGIFVKSIINGGAASKDGRLRVNDQLIAVNGESLLGKANQEAMETLRRSMSTEGNKRGMIQLIVARRISRCNELRSPGSPAAPELPIETELDDRERRISHSLYSGIEGLDESPTRNAALSRIMGKCQLSPTVNMPHDDTVMIEDDRLPVLPPHLSDQSSSSSHDDVGFIMTEAGTWAKATISDSADCSLSPDVDPVLAFQREGFGRQSMSEKRTKQFSDASQLDFVKTRKSKSMDLVADETKLNTVDDQRAGSPSRDVGPSLGLKKSSSLESLQTAVAEVTLNGNIPFHRPRPRIIRGRGCNESFRAAIDKSYDKPMVDDDDEGMETLEEDTEESSRSGRESVSTSSDQPSYSLERQMNGDPEKRDKTERKKDKAGKDKKKDREKEKDKLKAKKGMLKGLGDMFRFGKHRKDDKMEKMGRIKIQDSFTSEEDRVRMKEEQERIQAKTREFRERQARERDYAEIQDFHRTFGCDDELLYGGMSSYEGCLALNARPQSPREGHLMDTLYAQVKKPRSSKPGDSNRSTPSNHDRIQRLRQEFQQAKQDEDVEDRRRTYSFEQSWSSSRPASQSGRHSVSVEVQVQRQRQEERESFQQAQRQYSSLPRQSRKNASSISQDSWEQNYAPGEGFQSAKENPRYSSYQGSRNGYLGGHGFNARVMLETQELLRQEQRRKEQQLKKQPPADGVRGPFRQDVPPSPSQVARLNRLQTPEKGRPFYS.

Ser25 is subject to Phosphoserine. Thr91 bears the Phosphothreonine mark. Residues 143 to 262 (SSDPALTGLS…VGHADTGLEN (120 aa)) are disordered. 2 stretches are compositionally biased toward polar residues: residues 150–163 (GLST…FSSE) and 171–187 (TRWS…TAGS). 2 positions are modified to phosphoserine: Ser156 and Ser174. Residues 190–203 (TCDRKKDENYRSLP) are compositionally biased toward basic and acidic residues. Residues 207-224 (SSWSNQFQRDNARSSLSA) are compositionally biased toward polar residues. The 89-residue stretch at 271 to 359 (MVKLVQVPND…ARVIWFHVVP (89 aa)) folds into the PDZ 1 domain. Disordered regions lie at residues 369–388 (LSQR…DSHC) and 397–441 (NAPQ…APPS). Ser383 carries the post-translational modification Phosphoserine. PDZ domains are found at residues 461–546 (NIQL…LVFR) and 590–677 (EVPL…GMIQ). A Phosphotyrosine modification is found at Tyr489. Phosphoserine is present on residues Ser692, Ser695, Ser715, Ser728, Ser806, and Ser824. Interaction with PRKCI and PRKCZ regions lie at residues 712-932 (RRIS…YDKP) and 712-936 (RRIS…MVDD). Position 831 is an N6-acetyllysine (Lys831). Ser834 is subject to Phosphoserine. Lys848 carries the N6-acetyllysine modification. 2 positions are modified to phosphoserine: Ser849 and Ser869. Disordered regions lie at residues 861 to 884 (TVDD…KKSS), 928 to 1011 (SYDK…AKKG), 1024 to 1071 (KHRK…ERQA), 1110 to 1267 (PQSP…LGGH), and 1283 to 1333 (QEQR…PFYS). Lys881 carries the N6-acetyllysine modification. Positions 931 to 1333 (KPMVDDDDEG…TPEKGRPFYS (403 aa)) are interaction with FRMD4A. The segment covering 935–949 (DDDDEGMETLEEDTE) has biased composition (acidic residues). At Ser958 the chain carries Phosphoserine; by AURKA. 2 positions are modified to phosphoserine: Ser967 and Ser969. Basic and acidic residues-rich tracts occupy residues 977-1005 (DPEK…EKDK) and 1026-1039 (RKDD…RIKI). Residue Ser1042 is modified to Phosphoserine. The segment covering 1046-1071 (EEDRVRMKEEQERIQAKTREFRERQA) has biased composition (basic and acidic residues). Residues 1046–1078 (EEDRVRMKEEQERIQAKTREFRERQARERDYAE) adopt a coiled-coil conformation. The span at 1134–1143 (PGDSNRSTPS) shows a compositional bias: polar residues. Over residues 1144-1171 (NHDRIQRLRQEFQQAKQDEDVEDRRRTY) the composition is skewed to basic and acidic residues. Coiled-coil stretches lie at residues 1145–1168 (HDRI…EDRR), 1195–1218 (VQVQ…YSSL), and 1274–1295 (MLET…LKKQ). Residues 1176-1199 (SWSSSRPASQSGRHSVSVEVQVQR) are compositionally biased toward low complexity. Residues 1215–1236 (YSSLPRQSRKNASSISQDSWEQ) are compositionally biased toward polar residues. A compositionally biased stretch (basic and acidic residues) spans 1283 to 1292 (QEQRRKEQQL). The segment covering 1314 to 1323 (SQVARLNRLQ) has biased composition (polar residues). The span at 1324-1333 (TPEKGRPFYS) shows a compositional bias: basic and acidic residues. An N6-acetyllysine modification is found at Lys1327.

Belongs to the PAR3 family. Interacts with PRCKI and CDH5. Interacts (via PDZ 3 domain) with PTEN (via C-terminus). Component of a complex whose core is composed of ARHGAP17, AMOT, PALS1, PATJ and PARD3/PAR3. Interacts with LIMK2, AURKA and AURKB. Component of the Par polarity complex, composed of at least phosphorylated PRKCZ, PARD3 and TIAM1. Interacts with ECT2 and FBF1. Interacts (via PDZ 1 domain) with F11R/JAM1, PARD6A and PARD6B. Part of a complex with PARD6A or PARD6B, PRKCI or PRKCZ and CDC42 or RAC1. Directly interacts with TIAM1 and TIAM2. Interacts with SIRT2. Interacts (via coiled-coil domain) with FRMD4A. Found in a complex with PARD3, CYTH1 and FRMD4A. Interacts with SAPCD2. Interacts with PRKCA. As to quaternary structure, interacts with PRKCZ. In terms of processing, acetylated. Deacetylated by SIRT2, thereby inhibiting Schwann cell peripheral myelination. Post-translationally, phosphorylation at Ser-824 by PRKCZ and PRKCI occurs at the most apical tip of epithelial cell-cell contacts during the initial phase of tight junction formation and may promote dissociation of the complex with PARD6. EGF-induced Tyr-1123 phosphorylation mediates dissociation from LIMK2. Phosphorylation by AURKA at Ser-958 is required for the normal establishment of neuronal polarity. Isoform 4 and isoform 5 are phosphorylated during oocyte maturation. All isoforms are expressed in heart, while expression in brain is mainly limited to isoform 1, and to isoform 3 to a weaker level.

Its subcellular location is the cytoplasm. The protein localises to the endomembrane system. It localises to the cell junction. The protein resides in the tight junction. It is found in the adherens junction. Its subcellular location is the cell cortex. The protein localises to the cytoskeleton. It localises to the cell membrane. Functionally, adapter protein involved in asymmetrical cell division and cell polarization processes. Seems to play a central role in the formation of epithelial tight junctions. Targets the phosphatase PTEN to cell junctions. Association with PARD6B may prevent the interaction of PARD3 with F11R/JAM1, thereby preventing tight junction assembly. The PARD6-PARD3 complex links GTP-bound Rho small GTPases to atypical protein kinase C proteins. Required for establishment of neuronal polarity and normal axon formation in cultured hippocampal neurons. Involved in Schwann cell peripheral myelination. This Mus musculus (Mouse) protein is Partitioning defective 3 homolog (Pard3).